The primary structure comprises 318 residues: Acetyl-coenzyme A carboxylase carboxyl transferase subunit alpha (318 aa).

In terms of domain architecture, CoA carboxyltransferase C-terminal spans 31–292 (DLIKEVSALE…KDAILRQLEL (262 aa)).

Belongs to the AccA family. As to quaternary structure, acetyl-CoA carboxylase is a heterohexamer composed of biotin carboxyl carrier protein (AccB), biotin carboxylase (AccC) and two subunits each of ACCase subunit alpha (AccA) and ACCase subunit beta (AccD).

The protein localises to the cytoplasm. The catalysed reaction is N(6)-carboxybiotinyl-L-lysyl-[protein] + acetyl-CoA = N(6)-biotinyl-L-lysyl-[protein] + malonyl-CoA. It functions in the pathway lipid metabolism; malonyl-CoA biosynthesis; malonyl-CoA from acetyl-CoA: step 1/1. In terms of biological role, component of the acetyl coenzyme A carboxylase (ACC) complex. First, biotin carboxylase catalyzes the carboxylation of biotin on its carrier protein (BCCP) and then the CO(2) group is transferred by the carboxyltransferase to acetyl-CoA to form malonyl-CoA. This chain is Acetyl-coenzyme A carboxylase carboxyl transferase subunit alpha, found in Hydrogenovibrio crunogenus (strain DSM 25203 / XCL-2) (Thiomicrospira crunogena).